Here is a 271-residue protein sequence, read N- to C-terminus: Putative F-box protein L165 (271 aa).

The F-box domain occupies 4-49 (ICELFDDVILEIMNLLSDTDKINFMFCCSRFYYFIDLVYYNDIYDY). The interval 251–271 (NIPKIVPKNTHYRNSSKKYRY) is disordered. Basic residues predominate over residues 260-271 (THYRNSSKKYRY).

The polypeptide is Putative F-box protein L165 (Acanthamoeba polyphaga mimivirus (APMV)).